Here is a 288-residue protein sequence, read N- to C-terminus: Energy-coupling factor transporter ATP-binding protein EcfA2 (288 aa).

The ABC transporter domain maps to 2 to 244 (IKFEKVNYTY…VDFLKAHELG (243 aa)). 39–46 (GHTGSGKS) provides a ligand contact to ATP. E170 acts as the Proton acceptor in catalysis.

This sequence belongs to the ABC transporter superfamily. Energy-coupling factor EcfA family. In terms of assembly, forms a stable energy-coupling factor (ECF) transporter complex composed of 2 membrane-embedded substrate-binding proteins (S component), 2 ATP-binding proteins (A component) and 2 transmembrane proteins (T component). In L.lactis forms a stable complex with EcfA' and EcfT and substrate-binding components. In E.coli forms a stable complex with EcfA, EcfT and individually with 3 tested substrate-binding components (BioY, NiaX and ThiT) with a stoichiometry of 1.1:1:1. The core ECF complex interacts with a number of substrate-specific binding components, including BioY, BioY2, HmpT, NiaX, PanT, QueT, RibU and ThiT.

It is found in the cell membrane. Functionally, ATP-binding (A) component of a common energy-coupling factor (ECF) ABC-transporter complex. Unlike classic ABC transporters this ECF transporter provides the energy necessary to transport a number of different substrates. In this organism these probably include biotin, thiamine precursor, niacin, pantothenic acid, queuosine precursor, riboflavin and thiamine. Uptake of niacin or riboflavin into proteosomes containing EcfA1A2T and Niax or RibU has been demonstrated. Uptake requires hydrolyzable Mg-ATP and is substrate-specific; NiaX-containing proteosomes did not transport riboflavin. In Lactococcus lactis subsp. cremoris (strain MG1363), this protein is Energy-coupling factor transporter ATP-binding protein EcfA2.